A 231-amino-acid chain; its full sequence is Deoxyribose-phosphate aldolase (231 aa).

Asp-86 functions as the Proton donor/acceptor in the catalytic mechanism. Catalysis depends on Lys-147, which acts as the Schiff-base intermediate with acetaldehyde. Lys-172 serves as the catalytic Proton donor/acceptor. Residues 206–231 (WQAETAGETVTEPESDRDGADTTDGY) form a disordered region.

The protein belongs to the DeoC/FbaB aldolase family. DeoC type 1 subfamily.

Its subcellular location is the cytoplasm. The catalysed reaction is 2-deoxy-D-ribose 5-phosphate = D-glyceraldehyde 3-phosphate + acetaldehyde. Its pathway is carbohydrate degradation; 2-deoxy-D-ribose 1-phosphate degradation; D-glyceraldehyde 3-phosphate and acetaldehyde from 2-deoxy-alpha-D-ribose 1-phosphate: step 2/2. In terms of biological role, catalyzes a reversible aldol reaction between acetaldehyde and D-glyceraldehyde 3-phosphate to generate 2-deoxy-D-ribose 5-phosphate. The sequence is that of Deoxyribose-phosphate aldolase from Haloarcula marismortui (strain ATCC 43049 / DSM 3752 / JCM 8966 / VKM B-1809) (Halobacterium marismortui).